Consider the following 34-residue polypeptide: Photosystem II reaction center protein M (34 aa).

The chain crosses the membrane as a helical span at residues 5–25; sequence ILAFIATTLFVLVPTAFLLII.

Belongs to the PsbM family. PSII is composed of 1 copy each of membrane proteins PsbA, PsbB, PsbC, PsbD, PsbE, PsbF, PsbH, PsbI, PsbJ, PsbK, PsbL, PsbM, PsbT, PsbX, PsbY, PsbZ, Psb30/Ycf12, at least 3 peripheral proteins of the oxygen-evolving complex and a large number of cofactors. It forms dimeric complexes.

It is found in the plastid. It localises to the chloroplast thylakoid membrane. In terms of biological role, one of the components of the core complex of photosystem II (PSII). PSII is a light-driven water:plastoquinone oxidoreductase that uses light energy to abstract electrons from H(2)O, generating O(2) and a proton gradient subsequently used for ATP formation. It consists of a core antenna complex that captures photons, and an electron transfer chain that converts photonic excitation into a charge separation. This subunit is found at the monomer-monomer interface. This chain is Photosystem II reaction center protein M, found in Citrus sinensis (Sweet orange).